Here is a 507-residue protein sequence, read N- to C-terminus: Probable cytosol aminopeptidase (507 aa).

Mn(2+) contacts are provided by Lys254 and Asp259. The active site involves Lys266. Asp277, Asp336, and Glu338 together coordinate Mn(2+). Arg340 is a catalytic residue. A disordered region spans residues 486–507; the sequence is PRKAQPKARSAKRSKPVSRTRA. Residues 489–507 are compositionally biased toward basic residues; the sequence is AQPKARSAKRSKPVSRTRA.

It belongs to the peptidase M17 family. The cofactor is Mn(2+).

It localises to the cytoplasm. It catalyses the reaction Release of an N-terminal amino acid, Xaa-|-Yaa-, in which Xaa is preferably Leu, but may be other amino acids including Pro although not Arg or Lys, and Yaa may be Pro. Amino acid amides and methyl esters are also readily hydrolyzed, but rates on arylamides are exceedingly low.. It carries out the reaction Release of an N-terminal amino acid, preferentially leucine, but not glutamic or aspartic acids.. In terms of biological role, presumably involved in the processing and regular turnover of intracellular proteins. Catalyzes the removal of unsubstituted N-terminal amino acids from various peptides. The protein is Probable cytosol aminopeptidase of Polaromonas sp. (strain JS666 / ATCC BAA-500).